The primary structure comprises 287 residues: Ribosomal RNA small subunit methyltransferase A (287 aa).

6 residues coordinate S-adenosyl-L-methionine: Asn35, Val37, Gly62, Glu83, Asp113, and Asn131.

The protein belongs to the class I-like SAM-binding methyltransferase superfamily. rRNA adenine N(6)-methyltransferase family. RsmA subfamily.

It is found in the cytoplasm. The catalysed reaction is adenosine(1518)/adenosine(1519) in 16S rRNA + 4 S-adenosyl-L-methionine = N(6)-dimethyladenosine(1518)/N(6)-dimethyladenosine(1519) in 16S rRNA + 4 S-adenosyl-L-homocysteine + 4 H(+). Its function is as follows. Specifically dimethylates two adjacent adenosines (A1518 and A1519) in the loop of a conserved hairpin near the 3'-end of 16S rRNA in the 30S particle. May play a critical role in biogenesis of 30S subunits. This Thermobifida fusca (strain YX) protein is Ribosomal RNA small subunit methyltransferase A.